The sequence spans 72 residues: Translation initiation factor IF-1 (72 aa).

Residues 1-72 form the S1-like domain; sequence MSKEDHIEME…SKARITFRHR (72 aa).

This sequence belongs to the IF-1 family. In terms of assembly, component of the 30S ribosomal translation pre-initiation complex which assembles on the 30S ribosome in the order IF-2 and IF-3, IF-1 and N-formylmethionyl-tRNA(fMet); mRNA recruitment can occur at any time during PIC assembly.

The protein resides in the cytoplasm. One of the essential components for the initiation of protein synthesis. Stabilizes the binding of IF-2 and IF-3 on the 30S subunit to which N-formylmethionyl-tRNA(fMet) subsequently binds. Helps modulate mRNA selection, yielding the 30S pre-initiation complex (PIC). Upon addition of the 50S ribosomal subunit IF-1, IF-2 and IF-3 are released leaving the mature 70S translation initiation complex. This is Translation initiation factor IF-1 from Methylococcus capsulatus (strain ATCC 33009 / NCIMB 11132 / Bath).